We begin with the raw amino-acid sequence, 624 residues long: DNA mismatch repair protein MutL (624 aa).

The protein belongs to the DNA mismatch repair MutL/HexB family.

This protein is involved in the repair of mismatches in DNA. It is required for dam-dependent methyl-directed DNA mismatch repair. May act as a 'molecular matchmaker', a protein that promotes the formation of a stable complex between two or more DNA-binding proteins in an ATP-dependent manner without itself being part of a final effector complex. The sequence is that of DNA mismatch repair protein MutL from Chlorobium phaeobacteroides (strain DSM 266 / SMG 266 / 2430).